The sequence spans 290 residues: Arylamine N-acetyltransferase 1 (290 aa).

Met1 is subject to N-acetylmethionine. Cys68 acts as the Acyl-thioester intermediate in catalysis. Ser103 serves as a coordination point for CoA. Substrate is bound at residue Val106 to His107. Residues His107 and Asp122 contribute to the active site. Tyr208 is a binding site for CoA.

It belongs to the arylamine N-acetyltransferase family.

Its subcellular location is the cytoplasm. The catalysed reaction is an arylamine + acetyl-CoA = an N-acetylarylamine + CoA. In terms of biological role, participates in the detoxification of a plethora of hydrazine and arylamine drugs. Isoniazid, 2-aminofluorene and anisidine are preferred substrates for NAT-1. No activity with p-aminobenzoic acid (PABA) nor SMZ. The protein is Arylamine N-acetyltransferase 1 (Nat1) of Mus musculus (Mouse).